Here is a 151-residue protein sequence, read N- to C-terminus: Large ribosomal subunit protein bL9 (151 aa).

This sequence belongs to the bacterial ribosomal protein bL9 family.

In terms of biological role, binds to the 23S rRNA. This is Large ribosomal subunit protein bL9 from Nitrosomonas europaea (strain ATCC 19718 / CIP 103999 / KCTC 2705 / NBRC 14298).